A 209-amino-acid chain; its full sequence is Large ribosomal subunit protein uL4 (209 aa).

The tract at residues 44–77 (QRQGTHKSKERSEVSGSTRKLIRQKGGGGARRGD) is disordered.

Belongs to the universal ribosomal protein uL4 family. As to quaternary structure, part of the 50S ribosomal subunit.

Functionally, one of the primary rRNA binding proteins, this protein initially binds near the 5'-end of the 23S rRNA. It is important during the early stages of 50S assembly. It makes multiple contacts with different domains of the 23S rRNA in the assembled 50S subunit and ribosome. Its function is as follows. Forms part of the polypeptide exit tunnel. This chain is Large ribosomal subunit protein uL4, found in Parabacteroides distasonis (strain ATCC 8503 / DSM 20701 / CIP 104284 / JCM 5825 / NCTC 11152).